Reading from the N-terminus, the 440-residue chain is Proline--tRNA ligase (440 aa).

The protein belongs to the class-II aminoacyl-tRNA synthetase family. ProS type 2 subfamily. Homodimer.

The protein localises to the cytoplasm. It carries out the reaction tRNA(Pro) + L-proline + ATP = L-prolyl-tRNA(Pro) + AMP + diphosphate. In terms of biological role, catalyzes the attachment of proline to tRNA(Pro) in a two-step reaction: proline is first activated by ATP to form Pro-AMP and then transferred to the acceptor end of tRNA(Pro). This Rhizobium johnstonii (strain DSM 114642 / LMG 32736 / 3841) (Rhizobium leguminosarum bv. viciae) protein is Proline--tRNA ligase.